The chain runs to 310 residues: MLKIIRAGMYTTVQDGGRHGFRQSGISHCGALDMPALRIANLLVGNDANAPALEITLGQLTVEFETDGWFALTGAGCEARLDDNAVWTGWRLPMKAGQRLTLKRPQHGMRSYLAVAGGIDVPPVMGSCSTDLKVGIGGLEGRLLKDGDRLPIGKSKRDSMEAQGVKQLLWGNRIRALPGPEYHEFDRASQDAFWRSPWQLSSQSNRMGYRLQGQILKRTTDRELLSHGLLPGVVQVPHNGQPIVLMNDAQTTGGYPRIACIIEADMYHLAQIPLGQPIHFVQCSLEEALKARQDQQRYFEQLAWRLHNEN.

This sequence belongs to the PxpC family. Forms a complex composed of PxpA, PxpB and PxpC.

The enzyme catalyses 5-oxo-L-proline + ATP + 2 H2O = L-glutamate + ADP + phosphate + H(+). Functionally, catalyzes the cleavage of 5-oxoproline to form L-glutamate coupled to the hydrolysis of ATP to ADP and inorganic phosphate. The chain is 5-oxoprolinase subunit C from Escherichia coli (strain K12).